The primary structure comprises 155 residues: Molybdopterin synthase catalytic subunit 2 (155 aa).

Substrate contacts are provided by residues histidine 101 to arginine 102, lysine 117, and lysine 124 to glutamate 126.

It belongs to the MoaE family. MOCS2B subfamily. As to quaternary structure, heterotetramer; composed of 2 small (MOCS2A) and 2 large (MOCS2B) subunits.

The protein resides in the cytoplasm. It carries out the reaction 2 [molybdopterin-synthase sulfur-carrier protein]-C-terminal-Gly-aminoethanethioate + cyclic pyranopterin phosphate + H2O = molybdopterin + 2 [molybdopterin-synthase sulfur-carrier protein]-C-terminal Gly-Gly + 2 H(+). It functions in the pathway cofactor biosynthesis; molybdopterin biosynthesis. Functionally, catalytic subunit of the molybdopterin synthase complex, a complex that catalyzes the conversion of precursor Z into molybdopterin. Acts by mediating the incorporation of 2 sulfur atoms from thiocarboxylated MOCS2A into precursor Z to generate a dithiolene group. The chain is Molybdopterin synthase catalytic subunit 2 from Aedes aegypti (Yellowfever mosquito).